The primary structure comprises 293 residues: NAD kinase (293 aa).

Residue Asp68 is the Proton acceptor of the active site. NAD(+)-binding positions include 68 to 69 (DG), 142 to 143 (ND), Arg153, Asp172, and 183 to 188 (TAYSLS).

This sequence belongs to the NAD kinase family. The cofactor is a divalent metal cation.

It is found in the cytoplasm. It catalyses the reaction NAD(+) + ATP = ADP + NADP(+) + H(+). Functionally, involved in the regulation of the intracellular balance of NAD and NADP, and is a key enzyme in the biosynthesis of NADP. Catalyzes specifically the phosphorylation on 2'-hydroxyl of the adenosine moiety of NAD to yield NADP. The sequence is that of NAD kinase from Lachnospira eligens (strain ATCC 27750 / DSM 3376 / VPI C15-48 / C15-B4) (Eubacterium eligens).